The primary structure comprises 2142 residues: U5 small nuclear ribonucleoprotein 200 kDa helicase (2142 aa).

Disordered regions lie at residues Met-52–Arg-74, Glu-211–Gly-234, and Arg-366–Ala-396. Basic and acidic residues predominate over residues Asp-369–Ala-391. Residues Lys-490 to Leu-673 form the Helicase ATP-binding 1 domain. Residue Ala-503–Thr-510 participates in ATP binding. A DEIH box motif is present at residues Asp-615–His-618. Residues Ser-684–Val-917 form the Helicase C-terminal 1 domain. Positions Val-981–Phe-1286 constitute an SEC63 1 domain. The region spanning Asn-1337–Phe-1511 is the Helicase ATP-binding 2 domain. Ala-1350–Met-1357 is an ATP binding site. A DELQ box motif is present at residues Asp-1453–Gln-1456. The Helicase C-terminal 2 domain maps to Pro-1544–Asp-1752. The 318-residue stretch at Pro-1811–Ile-2128 folds into the SEC63 2 domain.

The protein belongs to the helicase family. SKI2 subfamily.

It localises to the nucleus. The catalysed reaction is ATP + H2O = ADP + phosphate + H(+). Its function is as follows. Catalyzes the ATP-dependent unwinding of U4/U6 RNA duplices, an essential step in the assembly of a catalytically active spliceosome. Plays a role in pre-mRNA splicing. The protein is U5 small nuclear ribonucleoprotein 200 kDa helicase of Drosophila melanogaster (Fruit fly).